Consider the following 200-residue polypeptide: ATP-dependent Clp protease proteolytic subunit (200 aa).

Catalysis depends on serine 98, which acts as the Nucleophile. Residue histidine 123 is part of the active site.

It belongs to the peptidase S14 family. In terms of assembly, fourteen ClpP subunits assemble into 2 heptameric rings which stack back to back to give a disk-like structure with a central cavity, resembling the structure of eukaryotic proteasomes.

It is found in the cytoplasm. The enzyme catalyses Hydrolysis of proteins to small peptides in the presence of ATP and magnesium. alpha-casein is the usual test substrate. In the absence of ATP, only oligopeptides shorter than five residues are hydrolyzed (such as succinyl-Leu-Tyr-|-NHMec, and Leu-Tyr-Leu-|-Tyr-Trp, in which cleavage of the -Tyr-|-Leu- and -Tyr-|-Trp bonds also occurs).. Cleaves peptides in various proteins in a process that requires ATP hydrolysis. Has a chymotrypsin-like activity. Plays a major role in the degradation of misfolded proteins. The chain is ATP-dependent Clp protease proteolytic subunit from Deinococcus geothermalis (strain DSM 11300 / CIP 105573 / AG-3a).